The chain runs to 349 residues: Serine/threonine-protein kinase SRK2A (349 aa).

Residues 12–268 enclose the Protein kinase domain; sequence YELVKDIGSG…IQEIKNHEWF (257 aa). ATP-binding positions include 18–26 and Lys-41; that span reads IGSGNFGVA. Asp-131 serves as the catalytic Proton acceptor. Residues 151 to 177 are activation loop; sequence DFGYSKSSLLHSQPKSTVGTPAYIAPE.

The protein belongs to the protein kinase superfamily. Ser/Thr protein kinase family.

It catalyses the reaction L-seryl-[protein] + ATP = O-phospho-L-seryl-[protein] + ADP + H(+). The catalysed reaction is L-threonyl-[protein] + ATP = O-phospho-L-threonyl-[protein] + ADP + H(+). With respect to regulation, activated by osmotic stress and by abscisic acid (ABA). Activation by NaCl is dependent on ABA. Functionally, involved in early responses to osmotic stress. The polypeptide is Serine/threonine-protein kinase SRK2A (Physcomitrium patens (Spreading-leaved earth moss)).